The primary structure comprises 458 residues: Probable Xaa-Pro aminopeptidase pepP (458 aa).

The Mn(2+) site is built by aspartate 254, aspartate 265, glutamate 388, and glutamate 428.

The protein belongs to the peptidase M24B family. It depends on Mn(2+) as a cofactor.

The enzyme catalyses Release of any N-terminal amino acid, including proline, that is linked to proline, even from a dipeptide or tripeptide.. Catalyzes the removal of a penultimate prolyl residue from the N-termini of peptides. This is Probable Xaa-Pro aminopeptidase pepP (pepP) from Botryotinia fuckeliana (strain B05.10) (Noble rot fungus).